Consider the following 572-residue polypeptide: Receptor-type adenylate cyclase GRESAG 4.2 (572 aa).

The Extracellular segment spans residues 1–225 (RKTLLTFGLN…PNGNALTPAQ (225 aa)). 3 N-linked (GlcNAc...) asparagine glycosylation sites follow: N10, N77, and N152. Residues 226-251 (LDWCGWCRFACADTGSRLTVFLCCIM) traverse the membrane as a helical segment. The Cytoplasmic portion of the chain corresponds to 252 to 572 (RNKRDNDNAP…TVRRLSVALQ (321 aa)). The 156-residue stretch at 269–424 (TLIFTDIESS…QTANTAARTE (156 aa)) folds into the Guanylate cyclase domain. Residues D274 and D317 each coordinate Mg(2+).

Belongs to the adenylyl cyclase class-3 family. Requires Mg(2+) as cofactor.

It localises to the cell membrane. It carries out the reaction ATP = 3',5'-cyclic AMP + diphosphate. Its function is as follows. Could act as a receptor for an unknown ligand. The protein is Receptor-type adenylate cyclase GRESAG 4.2 (GRESAG 4.2) of Trypanosoma brucei brucei.